Consider the following 335-residue polypeptide: Beta-1,4-mannooligosaccharide phosphorylase (335 aa).

Belongs to the glycosyl hydrolase 130 family. As to quaternary structure, homohexamer in solution.

The catalysed reaction is [(1-&gt;4)-beta-D-mannosyl](n) + phosphate = [(1-&gt;4)-beta-D-mannosyl](n-1) + alpha-D-mannose 1-phosphate. Functionally, catalyzes the phosphorolysis of beta-1,4-mannooligosaccharides to mannose 1-phosphate (Man1P) and shorter mannooligosaccharides. Can also catalyze the phosphorolysis of 4-O-beta-D-mannopyranosyl-D-glucopyranose (Man-Glc), but shows higher activity toward longer mannooligosaccharides. Involved in a mannan catabolic pathway which feeds into glycolysis. This Ruminococcus albus (strain ATCC 27210 / DSM 20455 / JCM 14654 / NCDO 2250 / 7) protein is Beta-1,4-mannooligosaccharide phosphorylase.